The sequence spans 156 residues: Ribosome maturation factor RimP (156 aa).

The protein belongs to the RimP family.

It localises to the cytoplasm. Its function is as follows. Required for maturation of 30S ribosomal subunits. This is Ribosome maturation factor RimP from Bacillus subtilis (strain 168).